The chain runs to 525 residues: GMP synthase [glutamine-hydrolyzing] (525 aa).

Residues 9-207 enclose the Glutamine amidotransferase type-1 domain; it reads RILILDFGSQ…VRDICECEAL (199 aa). The active-site Nucleophile is C86. Residues H181 and E183 contribute to the active site. The 193-residue stretch at 208–400 folds into the GMPS ATP-PPase domain; the sequence is WTPAKIIDDA…LGLPYDMLYR (193 aa). 235 to 241 is an ATP binding site; it reads SGGVDSS.

Homodimer.

The catalysed reaction is XMP + L-glutamine + ATP + H2O = GMP + L-glutamate + AMP + diphosphate + 2 H(+). Its pathway is purine metabolism; GMP biosynthesis; GMP from XMP (L-Gln route): step 1/1. Functionally, catalyzes the synthesis of GMP from XMP. This is GMP synthase [glutamine-hydrolyzing] from Cronobacter sakazakii (strain ATCC BAA-894) (Enterobacter sakazakii).